The following is a 245-amino-acid chain: MRRVAAIVEYDGSNFFGYQGQPDVRTVQGVIEDALERIFKQRIYTQAAGRTDAGVHANGQLIAFNCPNDRMTTEDIKNAMNANLPDDVYVKKVFEVPKNFHPRFDVKKRIYHYFIHTSREKNVFLRKYAWWFPYELDLEAMRKAAKYLEGTHDFTSFKTGSDERDPVRTIYRIRILSLGKDMILIRVEGRSFLRRMVRNIVAALVKVGLRQWEPEKLKEVLEARDRSAAAGTAPAHGLYFYKVLF.

Catalysis depends on Asp-52, which acts as the Nucleophile. Position 111 (Tyr-111) interacts with substrate.

Belongs to the tRNA pseudouridine synthase TruA family. Homodimer.

It catalyses the reaction uridine(38/39/40) in tRNA = pseudouridine(38/39/40) in tRNA. Formation of pseudouridine at positions 38, 39 and 40 in the anticodon stem and loop of transfer RNAs. The sequence is that of tRNA pseudouridine synthase A from Thermotoga neapolitana (strain ATCC 49049 / DSM 4359 / NBRC 107923 / NS-E).